A 1351-amino-acid polypeptide reads, in one-letter code: Transcriptional regulator ovo (1351 aa).

Residues 1–31 (MPKIFLIKNRLHQQQQRLLESQNLLQHKNQD) are required for Ubr3 binding and tal-dependent proteolytic processing. Disordered regions lie at residues 22–77 (QNLL…SDQQ), 100–119 (LDHL…NPNQ), 184–397 (NSPI…SDEE), 447–554 (AGHG…HFNA), 640–665 (SNSK…GQTS), 778–807 (DDEE…PVEQ), 834–887 (GSNQ…YQHA), 916–1000 (LLSQ…PSPT), 1023–1044 (PMSS…GSSN), and 1113–1192 (SKHG…DSSS). Pro residues predominate over residues 49 to 60 (SPTPTSQPPPEP). 2 stretches are compositionally biased toward low complexity: residues 61 to 72 (QGQGQQVLGQVP) and 104 to 119 (NQNQ…NPNQ). A compositionally biased stretch (basic and acidic residues) spans 205–232 (EKEKPAEREREKSDERTEQVEKEERVER). The span at 233–242 (EEEEDDEVDV) shows a compositional bias: acidic residues. Basic and acidic residues predominate over residues 262-272 (QRKEYPQEPKD). Positions 324–340 (TPPPADQRPSPPPPRDP) are enriched in pro residues. Residues 447-486 (AGHGRNSSSSSGAAGQGFQSSGFGSQNSGSGSSSGNQNAG) are compositionally biased toward low complexity. The segment covering 487 to 505 (SGAGSPGSGAGGGGGMGGG) has biased composition (gly residues). Residues 530–552 (KSGQQSTASNNTGQSPGANHSHF) are compositionally biased toward polar residues. Basic residues predominate over residues 644–653 (FHNHHHHHQH). Residues 793 to 807 (STPSLTPDSVTPVEQ) show a composition bias toward polar residues. Composition is skewed to low complexity over residues 835 to 878 (SNQQ…HVQQ), 916 to 962 (LLSQ…QQQQ), 970 to 979 (QQQQQPQPQS), 1025 to 1044 (SSSS…GSSN), and 1121 to 1175 (HQQQ…HGSA). 4 C2H2-type zinc fingers span residues 1197–1219 (FVCR…MKCH), 1225–1247 (YLCT…TRTH), 1253–1276 (YKCN…QKVH), and 1292–1315 (YVCE…KNNH).

Interacts (via N-terminus) with Ubr3; the interaction is mediated by tal. Post-translationally, N-terminus is proteolytically cleaved and ubiquitinated via a tal-dependent mechanism, leading to the proteolytic degradation of the N-terminus and the production of transcriptional activator shavenbaby, a truncated form with transcriptional activator activity.

It localises to the cytoplasm. It is found in the nucleus. The protein localises to the nucleoplasm. Transcriptional regulator with essential functions in the germline and soma. Plays an essential role in regulating the formation of apical cell extensions such as denticles and aristae, and initiating cytoskeletal remodeling during epidermal differentiation. In terms of biological role, transcriptional repressor which functions in postembryonic development. The full-length unprocessed form acts as a transcriptional repressor (Transcriptional repressor svb). Its function is as follows. Transcriptional activator which initiates trichome development and also promotes tarsal joint development. Has an essential somatic role regulating the tal-dependent formation of trichomes, and initiating cytoskeletal remodeling during epidermal differentiation. Function with SoxN is required for correct denticle morphogenesis on the embryonic epidermis. SoxN and svb appear to act both independently and in conjunction with each other to activate certain genes involved in denticle morphogenesis; Svb appears to be involved in regulating denticle length whereas SoxN regulates the denticle base circumference. Also functions in the development of other apical cell extensions such as bristles. Also has an important role in tarsal joint development, repressing expression of the N ligand Dl and defining its signaling boundary. Functionally, transcriptional repressor which is specifically involved in female germline development, where it functions antagonistically to isoform D. Negatively regulates expression of otu and may also have autoregulatory activity. Negatively regulates expression of piwi in the primordial germ cells (PGCs). Transcriptional activator which is specifically involved in female germline development, where it functions antagonistically to isoform C. Necessary and sufficient for normal oogenesis. Required in the primordial germ cells (PGCs) for normal development of male and female germline cells. Plays a role in germline sex determination. Binds the promoter DNA and positively regulates the transcription of the otu gene in a stage-specific manner. May have autoregulatory activity. This is Transcriptional regulator ovo from Drosophila melanogaster (Fruit fly).